A 386-amino-acid polypeptide reads, in one-letter code: Formate-dependent phosphoribosylglycinamide formyltransferase (386 aa).

N(1)-(5-phospho-beta-D-ribosyl)glycinamide-binding positions include 15–16 (EL) and glutamate 75. Residues arginine 107, lysine 148, 153 to 158 (SSGKGQ), 188 to 191 (EQFI), and glutamate 196 contribute to the ATP site. An ATP-grasp domain is found at 112-301 (ALAAQQLNLQ…EFELHLRAIV (190 aa)). Glutamate 260 and glutamate 272 together coordinate Mg(2+). N(1)-(5-phospho-beta-D-ribosyl)glycinamide is bound by residues aspartate 279, lysine 349, and 356–357 (RR).

This sequence belongs to the PurK/PurT family. As to quaternary structure, homodimer.

The catalysed reaction is N(1)-(5-phospho-beta-D-ribosyl)glycinamide + formate + ATP = N(2)-formyl-N(1)-(5-phospho-beta-D-ribosyl)glycinamide + ADP + phosphate + H(+). It functions in the pathway purine metabolism; IMP biosynthesis via de novo pathway; N(2)-formyl-N(1)-(5-phospho-D-ribosyl)glycinamide from N(1)-(5-phospho-D-ribosyl)glycinamide (formate route): step 1/1. In terms of biological role, involved in the de novo purine biosynthesis. Catalyzes the transfer of formate to 5-phospho-ribosyl-glycinamide (GAR), producing 5-phospho-ribosyl-N-formylglycinamide (FGAR). Formate is provided by PurU via hydrolysis of 10-formyl-tetrahydrofolate. The chain is Formate-dependent phosphoribosylglycinamide formyltransferase from Francisella tularensis subsp. novicida (strain U112).